A 521-amino-acid polypeptide reads, in one-letter code: Glutamyl-tRNA(Gln) amidotransferase subunit A (521 aa).

Residues lysine 79 and serine 187 each act as charge relay system in the active site. Residue serine 211 is the Acyl-ester intermediate of the active site.

It belongs to the amidase family. GatA subfamily. In terms of assembly, heterotrimer of A, B and C subunits.

The catalysed reaction is L-glutamyl-tRNA(Gln) + L-glutamine + ATP + H2O = L-glutaminyl-tRNA(Gln) + L-glutamate + ADP + phosphate + H(+). In terms of biological role, allows the formation of correctly charged Gln-tRNA(Gln) through the transamidation of misacylated Glu-tRNA(Gln) in organisms which lack glutaminyl-tRNA synthetase. The reaction takes place in the presence of glutamine and ATP through an activated gamma-phospho-Glu-tRNA(Gln). In Mesorhizobium japonicum (strain LMG 29417 / CECT 9101 / MAFF 303099) (Mesorhizobium loti (strain MAFF 303099)), this protein is Glutamyl-tRNA(Gln) amidotransferase subunit A.